A 170-amino-acid chain; its full sequence is Acetyl-CoA decarbonylase/synthase complex subunit epsilon 2 (170 aa).

Belongs to the CdhB family. Heterotetramer of two alpha and two epsilon subunits. The ACDS complex is made up of alpha, epsilon, beta, gamma and delta subunits with a probable stoichiometry of (alpha(2)epsilon(2))(4)-beta(8)-(gamma(1)delta(1))(8).

It participates in one-carbon metabolism; methanogenesis from acetate. Functionally, part of a complex that catalyzes the reversible cleavage of acetyl-CoA, allowing growth on acetate as sole source of carbon and energy. The alpha-epsilon subcomponent functions as a carbon monoxide dehydrogenase. The precise role of the epsilon subunit is unclear; it may have a stabilizing role within the alpha(2)epsilon(2) component and/or be involved in electron transfer to FAD during a potential FAD-mediated CO oxidation. The protein is Acetyl-CoA decarbonylase/synthase complex subunit epsilon 2 (cdhB2) of Methanosarcina acetivorans (strain ATCC 35395 / DSM 2834 / JCM 12185 / C2A).